Consider the following 312-residue polypeptide: Type II methyltransferase M.NgoMIV (312 aa).

One can recognise an SAM-dependent MTase C5-type domain in the interval 3–311 (FTSLEICAGA…RQIIKALKKE (309 aa)). The active site involves Cys-74.

It belongs to the class I-like SAM-binding methyltransferase superfamily. C5-methyltransferase family.

The catalysed reaction is a 2'-deoxycytidine in DNA + S-adenosyl-L-methionine = a 5-methyl-2'-deoxycytidine in DNA + S-adenosyl-L-homocysteine + H(+). A methylase, recognizes the double-stranded sequence 5'-GCCGGC-3', methylates C-2 on both strands, and protects the DNA from cleavage by the NgoMIV endonuclease. In Neisseria gonorrhoeae, this protein is Type II methyltransferase M.NgoMIV (ngoMIVM).